The following is a 163-amino-acid chain: Crossover junction endodeoxyribonuclease RuvC (163 aa).

Active-site residues include Asp9, Glu76, and Asp148. Mg(2+) contacts are provided by Asp9, Glu76, and Asp148.

It belongs to the RuvC family. Homodimer which binds Holliday junction (HJ) DNA. The HJ becomes 2-fold symmetrical on binding to RuvC with unstacked arms; it has a different conformation from HJ DNA in complex with RuvA. In the full resolvosome a probable DNA-RuvA(4)-RuvB(12)-RuvC(2) complex forms which resolves the HJ. It depends on Mg(2+) as a cofactor.

Its subcellular location is the cytoplasm. It catalyses the reaction Endonucleolytic cleavage at a junction such as a reciprocal single-stranded crossover between two homologous DNA duplexes (Holliday junction).. Functionally, the RuvA-RuvB-RuvC complex processes Holliday junction (HJ) DNA during genetic recombination and DNA repair. Endonuclease that resolves HJ intermediates. Cleaves cruciform DNA by making single-stranded nicks across the HJ at symmetrical positions within the homologous arms, yielding a 5'-phosphate and a 3'-hydroxyl group; requires a central core of homology in the junction. The consensus cleavage sequence is 5'-(A/T)TT(C/G)-3'. Cleavage occurs on the 3'-side of the TT dinucleotide at the point of strand exchange. HJ branch migration catalyzed by RuvA-RuvB allows RuvC to scan DNA until it finds its consensus sequence, where it cleaves and resolves the cruciform DNA. This is Crossover junction endodeoxyribonuclease RuvC from Trichormus variabilis (strain ATCC 29413 / PCC 7937) (Anabaena variabilis).